Here is a 182-residue protein sequence, read N- to C-terminus: Small ribosomal subunit protein uS4 (182 aa).

Disordered stretches follow at residues 1–23 (MGHP…ADRI) and 158–182 (SSVA…KDEE). Residues 103 to 170 (RRLQSLVFKR…AKQFETQETE (68 aa)) enclose the S4 RNA-binding domain. The span at 167-182 (QETEEVAAEEEPKDEE) shows a compositional bias: acidic residues.

This sequence belongs to the universal ribosomal protein uS4 family. As to quaternary structure, part of the 30S ribosomal subunit. Contacts protein S5. The interaction surface between S4 and S5 is involved in control of translational fidelity.

In terms of biological role, one of the primary rRNA binding proteins, it binds directly to 16S rRNA where it nucleates assembly of the body of the 30S subunit. With S5 and S12 plays an important role in translational accuracy. This is Small ribosomal subunit protein uS4 from Methanosphaera stadtmanae (strain ATCC 43021 / DSM 3091 / JCM 11832 / MCB-3).